Consider the following 603-residue polypeptide: DNA mismatch repair protein MutL (603 aa).

The disordered stretch occupies residues 361 to 383 (KETPTLFSKPTIPEYVPSDEDAP).

It belongs to the DNA mismatch repair MutL/HexB family.

This protein is involved in the repair of mismatches in DNA. It is required for dam-dependent methyl-directed DNA mismatch repair. May act as a 'molecular matchmaker', a protein that promotes the formation of a stable complex between two or more DNA-binding proteins in an ATP-dependent manner without itself being part of a final effector complex. The chain is DNA mismatch repair protein MutL from Listeria monocytogenes serotype 4b (strain CLIP80459).